Here is a 583-residue protein sequence, read N- to C-terminus: SHC-transforming protein 1 (583 aa).

The residue at position 1 (Met1) is an N-acetylmethionine. The disordered stretch occupies residues 1–92 (MDLLPPKPKY…EPGRAADDGE (92 aa)). Residues 16-44 (ESLSSLEEGASGSTPPEELPSPSASSLGP) show a composition bias toward low complexity. Ser36 and Ser139 each carry phosphoserine. At Lys154 the chain carries N6-acetyllysine. The 184-residue stretch at 156 to 339 (MGPGVSYLVR…AGFDGSAWDE (184 aa)) folds into the PID domain. The segment at 340–487 (EEEEPPDHQY…SMAEQLRGEP (148 aa)) is CH1. 2 positions are modified to phosphotyrosine: Tyr349 and Tyr350. Positions 372–384 (AAPGAARPTAPNA) are enriched in low complexity. The disordered stretch occupies residues 372 to 415 (AAPGAARPTAPNAQTPSHLGATLPVGQPVGGDPEVRKQMPPPPP). At Tyr427 the chain carries Phosphotyrosine. Residue Ser453 is modified to Phosphoserine. One can recognise an SH2 domain in the interval 488-579 (WFHGKLSRRE…GSELCLQQPV (92 aa)).

As to quaternary structure, interacts with CPNE3; this interaction may mediate the binding of CPNE3 with ERBB2. Interacts with the NPXY motif of tyrosine-phosphorylated IGF1R and INSR in vitro via the PID domain. Once activated, binds to GRB2. Interacts with tyrosine-phosphorylated CD3T and DDR2. Interacts with the N-terminal region of SH2B2. Interacts with phosphorylated LRP1 and IRS4. Interacts with INPP5D/SHIP1 and INPPL1/SHIP2. Interacts with TRIM31. Interacts with PTPN6/SHP (tyrosine phosphorylated). Identified in a complex containing FGFR4, NCAM1, CDH2, PLCG1, FRS2, SRC, SHC1, GAP43 and CTT. Interacts with ALK, GAB2, GRB7 and KIT. Interacts with FLT4 (tyrosine-phosphorylated). Interacts with EPHB1 and GRB2; activates the MAPK/ERK cascade to regulate cell migration. Interacts with PDGFRB (tyrosine-phosphorylated). Interacts with ERBB4. Interacts with TEK/TIE2 (tyrosine-phosphorylated). Interacts with the Trk receptors NTRK1, NTRK2 and NTRK3; in a phosphotyrosine-dependent manner. Interacts with PTK2/FAK1. Interacts with CEACAM1; this interaction is CEACAM1-phosphorylation-dependent and mediates interaction with EGFR or INSR resulting in decrease coupling of SHC1 to the MAPK3/ERK1-MAPK1/ERK2 pathway. Interacts (via PID domain) with PEAK1 (when phosphorylated at 'Tyr-1188'). Found in a complex with PPP1CA, PPP1CC, SHC1 and PEAK1. (Microbial infection) Interacts with herpes simplex virus 1 UL46. Post-translationally, phosphorylated by activated epidermal growth factor receptor. Phosphorylated in response to FLT4 and KIT signaling. Isoform p46Shc and isoform p52Shc are phosphorylated on tyrosine residues of the Pro-rich domain. Isoform p66Shc is phosphorylated on Ser-36 by PRKCB upon treatment with insulin, hydrogen peroxide or irradiation with ultraviolet light. Tyrosine phosphorylated in response to FLT3 signaling. Tyrosine phosphorylated by activated PTK2B/PYK2. Tyrosine phosphorylated by ligand-activated ALK. Tyrosine phosphorylated by ligand-activated PDGFRB. Tyrosine phosphorylated by TEK/TIE2. May be tyrosine phosphorylated by activated PTK2/FAK1; tyrosine phosphorylation was seen in an astrocytoma biopsy, where PTK2/FAK1 kinase activity is high, but not in normal brain tissue. Isoform p52Shc dephosphorylation by PTPN2 may regulate interaction with GRB2. As to expression, widely expressed. Expressed in neural stem cells but absent in mature neurons.

It is found in the cytoplasm. The protein localises to the cell junction. The protein resides in the focal adhesion. Its subcellular location is the mitochondrion matrix. It localises to the mitochondrion. Its function is as follows. Signaling adapter that couples activated growth factor receptors to signaling pathways. Participates in a signaling cascade initiated by activated KIT and KITLG/SCF. Isoform p46Shc and isoform p52Shc, once phosphorylated, couple activated receptor tyrosine kinases to Ras via the recruitment of the GRB2/SOS complex and are implicated in the cytoplasmic propagation of mitogenic signals. Isoform p46Shc and isoform p52Shc may thus function as initiators of the Ras signaling cascade in various non-neuronal systems. Isoform p66Shc does not mediate Ras activation, but is involved in signal transduction pathways that regulate the cellular response to oxidative stress and life span. Isoform p66Shc acts as a downstream target of the tumor suppressor p53 and is indispensable for the ability of stress-activated p53 to induce elevation of intracellular oxidants, cytochrome c release and apoptosis. The expression of isoform p66Shc has been correlated with life span. Participates in signaling downstream of the angiopoietin receptor TEK/TIE2, and plays a role in the regulation of endothelial cell migration and sprouting angiogenesis. This Homo sapiens (Human) protein is SHC-transforming protein 1 (SHC1).